Reading from the N-terminus, the 440-residue chain is Ribosomal protein uS12 methylthiotransferase RimO (440 aa).

Residues 6–116 (PKVGFVSLGC…VVTAVHEVVP (111 aa)) enclose the MTTase N-terminal domain. Positions 15, 51, 80, 149, 153, and 156 each coordinate [4Fe-4S] cluster. Positions 135–373 (LTPRHYAYLK…MAHQQAISAA (239 aa)) constitute a Radical SAM core domain. The 65-residue stretch at 376–440 (QLKVGKEIEV…DEYDLWAELV (65 aa)) folds into the TRAM domain.

Belongs to the methylthiotransferase family. RimO subfamily. [4Fe-4S] cluster is required as a cofactor.

It is found in the cytoplasm. It catalyses the reaction L-aspartate(89)-[ribosomal protein uS12]-hydrogen + (sulfur carrier)-SH + AH2 + 2 S-adenosyl-L-methionine = 3-methylsulfanyl-L-aspartate(89)-[ribosomal protein uS12]-hydrogen + (sulfur carrier)-H + 5'-deoxyadenosine + L-methionine + A + S-adenosyl-L-homocysteine + 2 H(+). Functionally, catalyzes the methylthiolation of an aspartic acid residue of ribosomal protein uS12. The sequence is that of Ribosomal protein uS12 methylthiotransferase RimO from Pseudomonas aeruginosa (strain UCBPP-PA14).